The chain runs to 419 residues: Septin-2 (419 aa).

The Septin-type G domain maps to 40–306 (NGFVFNVMCI…ELYRQKRLEQ (267 aa)). Residues 50 to 57 (GETGLGKS) form a G1 motif region. Residues 50 to 57 (GETGLGKS), Ser79, Gly105, 186 to 194 (KADTISKVE), Gly240, and Arg255 each bind GTP. Residues 102–105 (DTVG) are G3 motif. The segment at 185–188 (AKAD) is G4 motif. Residues 259–269 (WGTVQVENETH) are important for dimerization.

It belongs to the TRAFAC class TrmE-Era-EngA-EngB-Septin-like GTPase superfamily. Septin GTPase family. May assemble into a multicomponent structure.

It localises to the cytoplasm. The protein resides in the cytoskeleton. Its subcellular location is the spindle. In terms of biological role, involved in cytokinesis. The sequence is that of Septin-2 from Drosophila melanogaster (Fruit fly).